A 93-amino-acid chain; its full sequence is Probable chloroethene reductive dehalogenase membrane anchor protein (93 aa).

Helical transmembrane passes span 3–23, 35–55, and 64–84; these read AIYF…FTWF, WVLG…TYAS, and SAWI…LFAA.

The protein belongs to the PceB family.

It is found in the cell membrane. May act as a membrane anchor for the chloroethene reductive dehalogenase VcrA. This Dehalococcoides mccartyi (strain VS) protein is Probable chloroethene reductive dehalogenase membrane anchor protein.